The chain runs to 661 residues: Bifunctional polymyxin resistance protein ArnA (661 aa).

The tract at residues Met1–Ile304 is formyltransferase ArnAFT. The Proton donor; for formyltransferase activity role is filled by His104. (6R)-10-formyltetrahydrofolate contacts are provided by residues Arg114 and Val136 to Asp140. The dehydrogenase ArnADH stretch occupies residues Arg314–Pro661. NAD(+) is bound by residues Asp347 and Asp368–Ile369. UDP-alpha-D-glucuronate contacts are provided by residues Ala393, Tyr398, and Thr432–Ser433. The Proton acceptor; for decarboxylase activity role is filled by Glu434. Residues Arg460, Asn492, Lys526 to Arg535, and Tyr613 contribute to the UDP-alpha-D-glucuronate site. Arg619 acts as the Proton donor; for decarboxylase activity in catalysis.

It in the N-terminal section; belongs to the Fmt family. UDP-L-Ara4N formyltransferase subfamily. The protein in the C-terminal section; belongs to the NAD(P)-dependent epimerase/dehydratase family. UDP-glucuronic acid decarboxylase subfamily. In terms of assembly, homohexamer, formed by a dimer of trimers.

The enzyme catalyses UDP-alpha-D-glucuronate + NAD(+) = UDP-beta-L-threo-pentopyranos-4-ulose + CO2 + NADH. The catalysed reaction is UDP-4-amino-4-deoxy-beta-L-arabinose + (6R)-10-formyltetrahydrofolate = UDP-4-deoxy-4-formamido-beta-L-arabinose + (6S)-5,6,7,8-tetrahydrofolate + H(+). It participates in nucleotide-sugar biosynthesis; UDP-4-deoxy-4-formamido-beta-L-arabinose biosynthesis; UDP-4-deoxy-4-formamido-beta-L-arabinose from UDP-alpha-D-glucuronate: step 1/3. It functions in the pathway nucleotide-sugar biosynthesis; UDP-4-deoxy-4-formamido-beta-L-arabinose biosynthesis; UDP-4-deoxy-4-formamido-beta-L-arabinose from UDP-alpha-D-glucuronate: step 3/3. Its pathway is bacterial outer membrane biogenesis; lipopolysaccharide biosynthesis. In terms of biological role, bifunctional enzyme that catalyzes the oxidative decarboxylation of UDP-glucuronic acid (UDP-GlcUA) to UDP-4-keto-arabinose (UDP-Ara4O) and the addition of a formyl group to UDP-4-amino-4-deoxy-L-arabinose (UDP-L-Ara4N) to form UDP-L-4-formamido-arabinose (UDP-L-Ara4FN). The modified arabinose is attached to lipid A and is required for resistance to polymyxin and cationic antimicrobial peptides. The sequence is that of Bifunctional polymyxin resistance protein ArnA from Klebsiella pneumoniae subsp. pneumoniae (strain ATCC 700721 / MGH 78578).